We begin with the raw amino-acid sequence, 367 residues long: Glycerol dehydrogenase (367 aa).

5 residues coordinate NAD(+): Asp37, Gly94, Lys95, Thr116, and Ser119. Residue Asp121 coordinates glycerol. Ser125, Leu127, and Tyr131 together coordinate NAD(+). Residues Asp171, His254, and His271 each contribute to the Zn(2+) site. Residue His254 participates in glycerol binding.

This sequence belongs to the iron-containing alcohol dehydrogenase family. Zn(2+) serves as cofactor.

The enzyme catalyses glycerol + NAD(+) = dihydroxyacetone + NADH + H(+). It participates in polyol metabolism; glycerol fermentation; glycerone phosphate from glycerol (oxidative route): step 1/2. Functionally, catalyzes the NAD-dependent oxidation of glycerol to dihydroxyacetone (glycerone). Allows microorganisms to utilize glycerol as a source of carbon under anaerobic conditions. This Escherichia coli O6:H1 (strain CFT073 / ATCC 700928 / UPEC) protein is Glycerol dehydrogenase (gldA).